The following is a 114-amino-acid chain: Tyrosine-protein phosphatase 13 (114 aa).

In terms of domain architecture, Tyrosine-protein phosphatase spans 1–114 (WRMLWEHNST…QFGQEGPITI (114 aa)). Glutamate 82 contacts substrate.

Belongs to the protein-tyrosine phosphatase family.

It carries out the reaction O-phospho-L-tyrosyl-[protein] + H2O = L-tyrosyl-[protein] + phosphate. This Styela plicata (Wrinkled sea squirt) protein is Tyrosine-protein phosphatase 13 (STY-13).